Consider the following 131-residue polypeptide: Small ribosomal subunit protein uS8 (131 aa).

It belongs to the universal ribosomal protein uS8 family. In terms of assembly, part of the 30S ribosomal subunit. Contacts proteins S5 and S12.

Functionally, one of the primary rRNA binding proteins, it binds directly to 16S rRNA central domain where it helps coordinate assembly of the platform of the 30S subunit. In Bacteroides fragilis (strain ATCC 25285 / DSM 2151 / CCUG 4856 / JCM 11019 / LMG 10263 / NCTC 9343 / Onslow / VPI 2553 / EN-2), this protein is Small ribosomal subunit protein uS8.